Consider the following 159-residue polypeptide: ATP synthase subunit b' (159 aa).

A helical membrane pass occupies residues 27–47 (ATLPLMAVQFLILTVILNALL).

This sequence belongs to the ATPase B chain family. As to quaternary structure, F-type ATPases have 2 components, F(1) - the catalytic core - and F(0) - the membrane proton channel. F(1) has five subunits: alpha(3), beta(3), gamma(1), delta(1), epsilon(1). F(0) has four main subunits: a(1), b(1), b'(1) and c(10-14). The alpha and beta chains form an alternating ring which encloses part of the gamma chain. F(1) is attached to F(0) by a central stalk formed by the gamma and epsilon chains, while a peripheral stalk is formed by the delta, b and b' chains.

The protein localises to the cellular thylakoid membrane. In terms of biological role, f(1)F(0) ATP synthase produces ATP from ADP in the presence of a proton or sodium gradient. F-type ATPases consist of two structural domains, F(1) containing the extramembraneous catalytic core and F(0) containing the membrane proton channel, linked together by a central stalk and a peripheral stalk. During catalysis, ATP synthesis in the catalytic domain of F(1) is coupled via a rotary mechanism of the central stalk subunits to proton translocation. Component of the F(0) channel, it forms part of the peripheral stalk, linking F(1) to F(0). The b'-subunit is a diverged and duplicated form of b found in plants and photosynthetic bacteria. In Synechococcus sp. (strain PCC 6716), this protein is ATP synthase subunit b'.